Reading from the N-terminus, the 146-residue chain is Peptide methionine sulfoxide reductase MsrB (146 aa).

The region spanning Leu-2–Tyr-125 is the MsrB domain. The Nucleophile role is filled by Cys-114.

This sequence belongs to the MsrB Met sulfoxide reductase family.

It carries out the reaction L-methionyl-[protein] + [thioredoxin]-disulfide + H2O = L-methionyl-(R)-S-oxide-[protein] + [thioredoxin]-dithiol. This Staphylococcus carnosus (strain TM300) protein is Peptide methionine sulfoxide reductase MsrB.